A 747-amino-acid chain; its full sequence is ESX-1 secretion system protein EccCa1 (747 aa).

3 consecutive transmembrane segments (helical) span residues 41 to 61, 65 to 85, and 222 to 242; these read ILPY…VAGG, LSPY…GGLA, and FPTI…TAMI. In terms of domain architecture, FtsK spans 456 to 665; that stretch reads GNVMYLDIKE…LRTTSSHESK (210 aa). ATP is bound at residue 479–486; it reads GTTGSGKS.

Part of the ESX-1 / type VII secretion system (T7SS), which is composed of cytosolic and membrane components. The ESX-1 membrane complex is composed of EccB1, EccCa1, EccCb1, EccD1 and EccE1.

It is found in the cell inner membrane. Its function is as follows. Part of the ESX-1 specialized secretion system, which delivers several virulence factors to host cells during infection, including the key virulence factors EsxA (ESAT-6) and EsxB (CFP-10). This Mycobacterium tuberculosis (strain CDC 1551 / Oshkosh) protein is ESX-1 secretion system protein EccCa1.